The primary structure comprises 1032 residues: Beta-galactosidase (1032 aa).

Positions 100 and 198 each coordinate substrate. Aspartate 198 lines the Na(+) pocket. 3 residues coordinate Mg(2+): glutamate 413, histidine 415, and glutamate 458. Residues glutamate 458 and 534-537 each bind substrate; that span reads EYAH. The active-site Proton donor is glutamate 458. The active-site Nucleophile is glutamate 534. A Mg(2+)-binding site is contributed by asparagine 594. Na(+) is bound by residues phenylalanine 598 and asparagine 601. Substrate contacts are provided by asparagine 601 and tryptophan 1006.

This sequence belongs to the glycosyl hydrolase 2 family. Homotetramer. It depends on Mg(2+) as a cofactor. The cofactor is Na(+).

It catalyses the reaction Hydrolysis of terminal non-reducing beta-D-galactose residues in beta-D-galactosides.. The sequence is that of Beta-galactosidase from Vibrio vulnificus (strain CMCP6).